A 252-amino-acid chain; its full sequence is Tabtoxin biosynthesis enzyme (252 aa).

A disordered region spans residues 1 to 23 (MYQRTATQLARKPASKQGETEMN).

Functionally, may play a role in tabtoxin biosynthesis. This Pseudomonas amygdali pv. tabaci (Pseudomonas syringae pv. tabaci) protein is Tabtoxin biosynthesis enzyme (tblA).